The following is a 159-amino-acid chain: MRCPFCGAEDTSVVDSRISEEGARIRRRRRCVECEKRFTTYETVELRFPQVIKQDGNRVEFNREKLYTSFARALHKRPVPTGQVDAAIERILQKLLGSGVQEISSRTIGEWVMQELYSLDKVAYIRFASVYRSFEDVGDFQEVIREVQSSPQNGDGPSS.

Residues 3–34 fold into a zinc finger; that stretch reads CPFCGAEDTSVVDSRISEEGARIRRRRRCVEC. In terms of domain architecture, ATP-cone spans 49–139; it reads PQVIKQDGNR…VYRSFEDVGD (91 aa).

The protein belongs to the NrdR family. It depends on Zn(2+) as a cofactor.

Negatively regulates transcription of bacterial ribonucleotide reductase nrd genes and operons by binding to NrdR-boxes. The sequence is that of Transcriptional repressor NrdR from Nitrosomonas europaea (strain ATCC 19718 / CIP 103999 / KCTC 2705 / NBRC 14298).